Reading from the N-terminus, the 266-residue chain is Undecaprenyl-diphosphatase (266 aa).

The next 8 helical transmembrane spans lie at 4–24 (WLIA…PVSS), 46–66 (VLIQ…RLWG), 82–102 (IGIL…HDFI), 105–125 (VLYE…FILL), 142–162 (YPLK…VPGV), 182–202 (AAEF…AYDL), 216–236 (LIGI…KTVL), and 244–264 (FAPF…LLYI).

This sequence belongs to the UppP family.

It localises to the cell inner membrane. The catalysed reaction is di-trans,octa-cis-undecaprenyl diphosphate + H2O = di-trans,octa-cis-undecaprenyl phosphate + phosphate + H(+). Its function is as follows. Catalyzes the dephosphorylation of undecaprenyl diphosphate (UPP). Confers resistance to bacitracin. The protein is Undecaprenyl-diphosphatase of Caulobacter vibrioides (strain ATCC 19089 / CIP 103742 / CB 15) (Caulobacter crescentus).